The following is a 273-amino-acid chain: Type IV secretion system protein PtlF (273 aa).

A signal peptide spans 1-20 (MMAARMMAAGLAATALSAHA).

It belongs to the TrbG/VirB9 family. In terms of assembly, forms a complex with PtlI.

The protein localises to the cell outer membrane. Functionally, component of the type IV secretion system ptl required for secretion of assembled pertussis toxin (PTX) through the outer membrane. This is Type IV secretion system protein PtlF (ptlF) from Bordetella pertussis (strain Tohama I / ATCC BAA-589 / NCTC 13251).